Here is a 621-residue protein sequence, read N- to C-terminus: Auxin response factor 13 (621 aa).

Positions 124–228 (FSKILTASDV…ELRFGIRRAK (105 aa)) form a DNA-binding region, TF-B3. Residues 508–600 (RSRIKVHMQG…EIKKMKLKNK (93 aa)) enclose the PB1 domain.

Belongs to the ARF family. As to quaternary structure, homodimers and heterodimers.

It localises to the nucleus. Functionally, auxin response factors (ARFs) are transcriptional factors that bind specifically to the DNA sequence 5'-TGTCTC-3' found in the auxin-responsive promoter elements (AuxREs). Could act as transcriptional activator or repressor. Formation of heterodimers with Aux/IAA proteins may alter their ability to modulate early auxin response genes expression. The polypeptide is Auxin response factor 13 (ARF13) (Arabidopsis thaliana (Mouse-ear cress)).